Here is a 93-residue protein sequence, read N- to C-terminus: UPF0147 protein PF0239 (93 aa).

This sequence belongs to the UPF0147 family.

The chain is UPF0147 protein PF0239 from Pyrococcus furiosus (strain ATCC 43587 / DSM 3638 / JCM 8422 / Vc1).